The chain runs to 404 residues: WD repeat and SOCS box-containing protein 2 (404 aa).

WD repeat units follow at residues 16 to 55, 81 to 140, 144 to 183, 188 to 226, 230 to 268, 283 to 322, and 325 to 362; these read GRPH…LIPW, GSPK…IWEV, LLLL…IWDL, KQIQ…LWSM, TLIR…MWDP, DPAM…IWAL, and KTPI…FWTA. Positions 68–87 are disordered; sequence AKSRSSKNETKGRGSPKEKT. Residues 356-404 form the SOCS box domain; it reads HVQFWTAPRVLSSLKHLCRKALRSFLTTYQVLALPIPKKMKEFLTYRTF.

The protein operates within protein modification; protein ubiquitination. Functionally, may be a substrate-recognition component of a SCF-like ECS (Elongin-Cullin-SOCS-box protein) E3 ubiquitin ligase complex which mediates the ubiquitination and subsequent proteasomal degradation of target proteins. This chain is WD repeat and SOCS box-containing protein 2 (WSB2), found in Homo sapiens (Human).